The following is a 192-amino-acid chain: MSKSTDRINLTNQFLIAMPNMADPTFSGTVVYLCDHSERGALGLVINRPTDIDLQALFSRIDLKLEIEPLLHVPVYFGGPVQTERGFVLHDPKDGNAYTSSMSVPGGLEMTTSKDVLEAVASGTGPERFLLTLGHAGWGAGQLEEEISKNGWLTVEADPKIVFDVPAEERLEAALALLGINLSMLSGEAGHA.

It belongs to the UPF0301 (AlgH) family.

This is UPF0301 protein Bphyt_0868 from Paraburkholderia phytofirmans (strain DSM 17436 / LMG 22146 / PsJN) (Burkholderia phytofirmans).